We begin with the raw amino-acid sequence, 299 residues long: Putative fructokinase (299 aa).

T130 contributes to the ATP binding site. Zn(2+)-binding residues include H153, C168, H171, and C174. Residues P182 and 230-234 (GVMQQ) each bind ATP.

The protein belongs to the ROK (NagC/XylR) family. It depends on Mg(2+) as a cofactor.

The catalysed reaction is D-fructose + ATP = D-fructose 6-phosphate + ADP + H(+). Inhibited by zinc ions. In terms of biological role, seems to be involved in the degradation of glucomannan. This Bacillus subtilis (strain 168) protein is Putative fructokinase (gmuE).